A 339-amino-acid chain; its full sequence is Anthranilate phosphoribosyltransferase (339 aa).

5-phospho-alpha-D-ribose 1-diphosphate is bound by residues G80, 83 to 84 (GD), T88, 90 to 93 (NIST), 108 to 116 (KHGNRSVSS), and S120. Anthranilate is bound at residue G80. S92 is a Mg(2+) binding site. N111 serves as a coordination point for anthranilate. Residue R166 participates in anthranilate binding. D225 and E226 together coordinate Mg(2+).

This sequence belongs to the anthranilate phosphoribosyltransferase family. As to quaternary structure, homodimer. Mg(2+) is required as a cofactor.

The enzyme catalyses N-(5-phospho-beta-D-ribosyl)anthranilate + diphosphate = 5-phospho-alpha-D-ribose 1-diphosphate + anthranilate. The protein operates within amino-acid biosynthesis; L-tryptophan biosynthesis; L-tryptophan from chorismate: step 2/5. In terms of biological role, catalyzes the transfer of the phosphoribosyl group of 5-phosphorylribose-1-pyrophosphate (PRPP) to anthranilate to yield N-(5'-phosphoribosyl)-anthranilate (PRA). The protein is Anthranilate phosphoribosyltransferase of Alkaliphilus metalliredigens (strain QYMF).